The sequence spans 234 residues: UPF0173 metal-dependent hydrolase RL2074 (234 aa).

It belongs to the UPF0173 family.

This Rhizobium johnstonii (strain DSM 114642 / LMG 32736 / 3841) (Rhizobium leguminosarum bv. viciae) protein is UPF0173 metal-dependent hydrolase RL2074.